We begin with the raw amino-acid sequence, 598 residues long: uncharacterized protein (598 aa).

This is an uncharacterized protein from Homo sapiens (Human).